The primary structure comprises 155 residues: uncharacterized protein (155 aa).

This is an uncharacterized protein from Saccharomyces cerevisiae (strain ATCC 204508 / S288c) (Baker's yeast).